Here is a 485-residue protein sequence, read N- to C-terminus: Glutamyl-tRNA(Gln) amidotransferase subunit A (485 aa).

Catalysis depends on charge relay system residues lysine 79 and serine 154. Catalysis depends on serine 178, which acts as the Acyl-ester intermediate.

This sequence belongs to the amidase family. GatA subfamily. As to quaternary structure, heterotrimer of A, B and C subunits.

It catalyses the reaction L-glutamyl-tRNA(Gln) + L-glutamine + ATP + H2O = L-glutaminyl-tRNA(Gln) + L-glutamate + ADP + phosphate + H(+). Its function is as follows. Allows the formation of correctly charged Gln-tRNA(Gln) through the transamidation of misacylated Glu-tRNA(Gln) in organisms which lack glutaminyl-tRNA synthetase. The reaction takes place in the presence of glutamine and ATP through an activated gamma-phospho-Glu-tRNA(Gln). This is Glutamyl-tRNA(Gln) amidotransferase subunit A from Staphylococcus aureus (strain MRSA252).